The following is a 766-amino-acid chain: Dipeptidyl peptidase 4 (766 aa).

The Cytoplasmic portion of the chain corresponds to Met-1–Lys-6. The helical; Signal-anchor for type II membrane protein transmembrane segment at Val-7–Leu-28 threads the bilayer. At Asn-29–Pro-766 the chain is on the extracellular side. Asn-85, Asn-92, Asn-150, Asn-219, Asn-229, Asn-281, and Asn-321 each carry an N-linked (GlcNAc...) asparagine glycan. Disulfide bonds link Cys-328–Cys-339, Cys-385–Cys-394, Cys-444–Cys-447, and Cys-454–Cys-472. An N-linked (GlcNAc...) asparagine glycan is attached at Asn-520. Catalysis depends on Ser-630, which acts as the Charge relay system. Cysteines 649 and 762 form a disulfide. A glycan (N-linked (GlcNAc...) asparagine) is linked at Asn-685. Residues Asp-708 and His-740 each act as charge relay system in the active site.

Belongs to the peptidase S9B family. DPPIV subfamily. As to quaternary structure, monomer. Homodimer. Heterodimer with Seprase (FAP). Requires homodimerization for optimal dipeptidyl peptidase activity and T-cell costimulation. Found in a membrane raft complex, at least composed of BCL10, CARD11, DPP4 and IKBKB. Associates with collagen. Interacts with PTPRC; the interaction is enhanced in an interleukin-12-dependent manner in activated lymphocytes. Interacts (via extracellular domain) with ADA; does not inhibit its dipeptidyl peptidase activity. Interacts with CAV1 (via the N-terminus); the interaction is direct. Interacts (via cytoplasmic tail) with CARD11 (via PDZ domain); its homodimerization is necessary for interaction with CARD11. Interacts with IGF2R; the interaction is direct. Interacts with GPC3. Interacts with human coronavirus-EMC spike protein and acts as a receptor for this virus. In terms of assembly, (Microbial infection) Interacts with MERS coronavirus/MERS-CoV spike protein. In terms of processing, the soluble form (Dipeptidyl peptidase 4 soluble form also named SDPP) derives from the membrane form (Dipeptidyl peptidase 4 membrane form also named MDPP) by proteolytic processing. N- and O-Glycosylated. Post-translationally, phosphorylated. Mannose 6-phosphate residues in the carbohydrate moiety are necessary for interaction with IGF2R in activated T-cells. Mannose 6-phosphorylation is induced during T-cell activation. As to expression, expressed specifically in lymphatic vessels but not in blood vessels in the skin, small intestine, esophagus, ovary, breast and prostate glands. Not detected in lymphatic vessels in the lung, kidney, uterus, liver and stomach (at protein level). Expressed in the poorly differentiated crypt cells of the small intestine as well as in the mature villous cells. Expressed at very low levels in the colon.

It localises to the secreted. The protein localises to the cell membrane. The protein resides in the apical cell membrane. It is found in the cell projection. Its subcellular location is the invadopodium membrane. It localises to the lamellipodium membrane. The protein localises to the cell junction. The protein resides in the membrane raft. It catalyses the reaction Release of an N-terminal dipeptide, Xaa-Yaa-|-Zaa-, from a polypeptide, preferentially when Yaa is Pro, provided Zaa is neither Pro nor hydroxyproline.. Inhibited by GPC3 and diprotin A. Its function is as follows. Cell surface glycoprotein receptor involved in the costimulatory signal essential for T-cell receptor (TCR)-mediated T-cell activation. Acts as a positive regulator of T-cell coactivation, by binding at least ADA, CAV1, IGF2R, and PTPRC. Its binding to CAV1 and CARD11 induces T-cell proliferation and NF-kappa-B activation in a T-cell receptor/CD3-dependent manner. Its interaction with ADA also regulates lymphocyte-epithelial cell adhesion. In association with FAP is involved in the pericellular proteolysis of the extracellular matrix (ECM), the migration and invasion of endothelial cells into the ECM. May be involved in the promotion of lymphatic endothelial cells adhesion, migration and tube formation. When overexpressed, enhanced cell proliferation, a process inhibited by GPC3. Also acts as a serine exopeptidase with a dipeptidyl peptidase activity that regulates various physiological processes by cleaving peptides in the circulation, including many chemokines, mitogenic growth factors, neuropeptides and peptide hormones such as brain natriuretic peptide 32. Removes N-terminal dipeptides sequentially from polypeptides having unsubstituted N-termini provided that the penultimate residue is proline. (Microbial infection) Acts as a receptor for human coronavirus MERS-CoV-2. The protein is Dipeptidyl peptidase 4 of Homo sapiens (Human).